Consider the following 417-residue polypeptide: Serine hydroxymethyltransferase (417 aa).

(6S)-5,6,7,8-tetrahydrofolate contacts are provided by residues Leu-121 and 125 to 127 (GHL). An N6-(pyridoxal phosphate)lysine modification is found at Lys-229. 355–357 (SPF) serves as a coordination point for (6S)-5,6,7,8-tetrahydrofolate.

The protein belongs to the SHMT family. As to quaternary structure, homodimer. Requires pyridoxal 5'-phosphate as cofactor.

The protein resides in the cytoplasm. The catalysed reaction is (6R)-5,10-methylene-5,6,7,8-tetrahydrofolate + glycine + H2O = (6S)-5,6,7,8-tetrahydrofolate + L-serine. It functions in the pathway one-carbon metabolism; tetrahydrofolate interconversion. It participates in amino-acid biosynthesis; glycine biosynthesis; glycine from L-serine: step 1/1. Catalyzes the reversible interconversion of serine and glycine with tetrahydrofolate (THF) serving as the one-carbon carrier. This reaction serves as the major source of one-carbon groups required for the biosynthesis of purines, thymidylate, methionine, and other important biomolecules. Also exhibits THF-independent aldolase activity toward beta-hydroxyamino acids, producing glycine and aldehydes, via a retro-aldol mechanism. The sequence is that of Serine hydroxymethyltransferase from Shewanella sp. (strain W3-18-1).